A 70-amino-acid chain; its full sequence is MILYTVMPQEIVFAEQNQETSAHEQIEYKGVPLLVEMKGNEAEVIQIMSTNPMHFLHPDISPGQKLKLNV.

This is an uncharacterized protein from Bacillus subtilis (strain 168).